Reading from the N-terminus, the 200-residue chain is MKIGIIAYQGSFEEHYLQLKRAFDKWSINGEITPVKIPKDLKDIDGVIIPGGESTTIGLVAKRLGILDELKEKITSGLPVMGTCAGAIMLAKEVSDAKVGKTSQPLIGAMNISIIRNYYGRQRESFEAIIDLSKIGKGKANVVFIRAPAITKLWGKAQSLAELNGVTVLAEENNILATTFHPELSDTTSIHEYFLHLVKG.

52 to 54 (GES) contributes to the L-glutamine binding site. The active-site Nucleophile is the Cys-84. L-glutamine contacts are provided by residues Arg-116 and 145–146 (IR). Residues His-181 and Glu-183 each act as charge relay system in the active site.

It belongs to the glutaminase PdxT/SNO family. As to quaternary structure, in the presence of PdxS, forms a dodecamer of heterodimers. Only shows activity in the heterodimer.

It catalyses the reaction aldehydo-D-ribose 5-phosphate + D-glyceraldehyde 3-phosphate + L-glutamine = pyridoxal 5'-phosphate + L-glutamate + phosphate + 3 H2O + H(+). It carries out the reaction L-glutamine + H2O = L-glutamate + NH4(+). The protein operates within cofactor biosynthesis; pyridoxal 5'-phosphate biosynthesis. Its function is as follows. Catalyzes the hydrolysis of glutamine to glutamate and ammonia as part of the biosynthesis of pyridoxal 5'-phosphate. The resulting ammonia molecule is channeled to the active site of PdxS. The sequence is that of Pyridoxal 5'-phosphate synthase subunit PdxT from Saccharolobus islandicus (strain Y.G.57.14 / Yellowstone #1) (Sulfolobus islandicus).